We begin with the raw amino-acid sequence, 178 residues long: NADH-quinone oxidoreductase subunit B (178 aa).

[4Fe-4S] cluster-binding residues include C45, C46, C111, and C140.

It belongs to the complex I 20 kDa subunit family. In terms of assembly, NDH-1 is composed of 15 different subunits. Subunits NuoB, C, D, E, F, and G constitute the peripheral sector of the complex. It depends on [4Fe-4S] cluster as a cofactor.

The protein localises to the cell membrane. It carries out the reaction a quinone + NADH + 5 H(+)(in) = a quinol + NAD(+) + 4 H(+)(out). NDH-1 shuttles electrons from NADH, via FMN and iron-sulfur (Fe-S) centers, to quinones in the respiratory chain. The immediate electron acceptor for the enzyme in this species is believed to be a menaquinone. Couples the redox reaction to proton translocation (for every two electrons transferred, four hydrogen ions are translocated across the cytoplasmic membrane), and thus conserves the redox energy in a proton gradient. The polypeptide is NADH-quinone oxidoreductase subunit B (Deinococcus geothermalis (strain DSM 11300 / CIP 105573 / AG-3a)).